The following is a 457-amino-acid chain: Siroheme synthase (457 aa).

Residues 1–204 are precorrin-2 dehydrogenase /sirohydrochlorin ferrochelatase; sequence MDHLPIFCQL…NDQKAITETT (204 aa). Residues 22-23 and 43-44 contribute to the NAD(+) site; these read DV and LA. Serine 128 carries the post-translational modification Phosphoserine. The uroporphyrinogen-III C-methyltransferase stretch occupies residues 216-457; sequence GEVVLVGAGP…RDKLNWFSNH (242 aa). Proline 225 serves as a coordination point for S-adenosyl-L-methionine. The active-site Proton acceptor is the aspartate 248. Catalysis depends on lysine 270, which acts as the Proton donor. S-adenosyl-L-methionine-binding positions include 301-303, isoleucine 306, 331-332, methionine 382, and glycine 411; these read GGD and TA.

This sequence in the N-terminal section; belongs to the precorrin-2 dehydrogenase / sirohydrochlorin ferrochelatase family. In the C-terminal section; belongs to the precorrin methyltransferase family.

It carries out the reaction uroporphyrinogen III + 2 S-adenosyl-L-methionine = precorrin-2 + 2 S-adenosyl-L-homocysteine + H(+). The catalysed reaction is precorrin-2 + NAD(+) = sirohydrochlorin + NADH + 2 H(+). The enzyme catalyses siroheme + 2 H(+) = sirohydrochlorin + Fe(2+). It functions in the pathway cofactor biosynthesis; adenosylcobalamin biosynthesis; precorrin-2 from uroporphyrinogen III: step 1/1. The protein operates within cofactor biosynthesis; adenosylcobalamin biosynthesis; sirohydrochlorin from precorrin-2: step 1/1. It participates in porphyrin-containing compound metabolism; siroheme biosynthesis; precorrin-2 from uroporphyrinogen III: step 1/1. Its pathway is porphyrin-containing compound metabolism; siroheme biosynthesis; siroheme from sirohydrochlorin: step 1/1. It functions in the pathway porphyrin-containing compound metabolism; siroheme biosynthesis; sirohydrochlorin from precorrin-2: step 1/1. Functionally, multifunctional enzyme that catalyzes the SAM-dependent methylations of uroporphyrinogen III at position C-2 and C-7 to form precorrin-2 via precorrin-1. Then it catalyzes the NAD-dependent ring dehydrogenation of precorrin-2 to yield sirohydrochlorin. Finally, it catalyzes the ferrochelation of sirohydrochlorin to yield siroheme. This is Siroheme synthase from Escherichia coli O7:K1 (strain IAI39 / ExPEC).